Here is a 37-residue protein sequence, read N- to C-terminus: Esculentin-2HSa (37 aa).

The cysteines at positions 31 and 37 are disulfide-linked.

As to expression, expressed by the skin glands.

The protein resides in the secreted. Its function is as follows. Has antibacterial activity against the Gram-positive bacterium S.aureus ATCC 25923 (MIC=32 uM) and the Gram-negative bacterium E.coli ATCC 25726 (MIC=16 uM). This chain is Esculentin-2HSa, found in Odorrana hosii (Hose's rock frog).